We begin with the raw amino-acid sequence, 294 residues long: Bifunctional protein FolD 1 (294 aa).

NADP(+) is bound by residues 165–167, S190, and T231; that span reads GRS.

Belongs to the tetrahydrofolate dehydrogenase/cyclohydrolase family. Homodimer.

The catalysed reaction is (6R)-5,10-methylene-5,6,7,8-tetrahydrofolate + NADP(+) = (6R)-5,10-methenyltetrahydrofolate + NADPH. The enzyme catalyses (6R)-5,10-methenyltetrahydrofolate + H2O = (6R)-10-formyltetrahydrofolate + H(+). The protein operates within one-carbon metabolism; tetrahydrofolate interconversion. In terms of biological role, catalyzes the oxidation of 5,10-methylenetetrahydrofolate to 5,10-methenyltetrahydrofolate and then the hydrolysis of 5,10-methenyltetrahydrofolate to 10-formyltetrahydrofolate. This Paenarthrobacter aurescens (strain TC1) protein is Bifunctional protein FolD 1.